The chain runs to 240 residues: 2,3,4,5-tetrahydropyridine-2,6-dicarboxylate N-acetyltransferase (240 aa).

It belongs to the transferase hexapeptide repeat family. DapH subfamily.

The catalysed reaction is (S)-2,3,4,5-tetrahydrodipicolinate + acetyl-CoA + H2O = L-2-acetamido-6-oxoheptanedioate + CoA. The protein operates within amino-acid biosynthesis; L-lysine biosynthesis via DAP pathway; LL-2,6-diaminopimelate from (S)-tetrahydrodipicolinate (acetylase route): step 1/3. In terms of biological role, catalyzes the transfer of an acetyl group from acetyl-CoA to tetrahydrodipicolinate. This chain is 2,3,4,5-tetrahydropyridine-2,6-dicarboxylate N-acetyltransferase, found in Bacillus mycoides (strain KBAB4) (Bacillus weihenstephanensis).